The primary structure comprises 295 residues: 3-methyl-2-oxobutanoate hydroxymethyltransferase (295 aa).

Residues 1–30 (MTSGRAMSPEETAPYGTGPARAESAPDAPA) form a disordered region. Residues Asp-76 and Asp-115 each contribute to the Mg(2+) site. 3-methyl-2-oxobutanoate is bound by residues 76–77 (DS), Asp-115, and Lys-145. Glu-147 contributes to the Mg(2+) binding site. Glu-213 serves as the catalytic Proton acceptor.

The protein belongs to the PanB family. As to quaternary structure, homodecamer; pentamer of dimers. The cofactor is Mg(2+).

Its subcellular location is the cytoplasm. It carries out the reaction 3-methyl-2-oxobutanoate + (6R)-5,10-methylene-5,6,7,8-tetrahydrofolate + H2O = 2-dehydropantoate + (6S)-5,6,7,8-tetrahydrofolate. Its pathway is cofactor biosynthesis; (R)-pantothenate biosynthesis; (R)-pantoate from 3-methyl-2-oxobutanoate: step 1/2. Its function is as follows. Catalyzes the reversible reaction in which hydroxymethyl group from 5,10-methylenetetrahydrofolate is transferred onto alpha-ketoisovalerate to form ketopantoate. The sequence is that of 3-methyl-2-oxobutanoate hydroxymethyltransferase from Nocardioides sp. (strain ATCC BAA-499 / JS614).